Reading from the N-terminus, the 431-residue chain is Adenylosuccinate synthetase (431 aa).

GTP contacts are provided by residues 13–19 (GDEGKGK) and 41–43 (GHT). Aspartate 14 functions as the Proton acceptor in the catalytic mechanism. 2 residues coordinate Mg(2+): aspartate 14 and glycine 41. Residues 14–17 (DEGK), 39–42 (NAGH), threonine 130, arginine 144, glutamine 225, threonine 240, and arginine 304 each bind IMP. Residue histidine 42 is the Proton donor of the active site. Position 300–306 (300–306 (AVTGRPR)) interacts with substrate. GTP is bound by residues arginine 306, 332–334 (KLD), and 415–417 (STG).

The protein belongs to the adenylosuccinate synthetase family. As to quaternary structure, homodimer. Mg(2+) is required as a cofactor.

Its subcellular location is the cytoplasm. The enzyme catalyses IMP + L-aspartate + GTP = N(6)-(1,2-dicarboxyethyl)-AMP + GDP + phosphate + 2 H(+). The protein operates within purine metabolism; AMP biosynthesis via de novo pathway; AMP from IMP: step 1/2. In terms of biological role, plays an important role in the de novo pathway of purine nucleotide biosynthesis. Catalyzes the first committed step in the biosynthesis of AMP from IMP. This chain is Adenylosuccinate synthetase, found in Legionella pneumophila subsp. pneumophila (strain Philadelphia 1 / ATCC 33152 / DSM 7513).